A 115-amino-acid polypeptide reads, in one-letter code: NADH-ubiquinone oxidoreductase chain 3 (115 aa).

Transmembrane regions (helical) follow at residues 4–24, 55–75, and 84–104; these read IVIL…AFWL, FFLI…LLPL, and TYFT…GLMY.

This sequence belongs to the complex I subunit 3 family. Core subunit of respiratory chain NADH dehydrogenase (Complex I) which is composed of 45 different subunits. Interacts with TMEM186. Interacts with TMEM242.

Its subcellular location is the mitochondrion inner membrane. It carries out the reaction a ubiquinone + NADH + 5 H(+)(in) = a ubiquinol + NAD(+) + 4 H(+)(out). In terms of biological role, core subunit of the mitochondrial membrane respiratory chain NADH dehydrogenase (Complex I) which catalyzes electron transfer from NADH through the respiratory chain, using ubiquinone as an electron acceptor. Essential for the catalytic activity of complex I. The protein is NADH-ubiquinone oxidoreductase chain 3 of Eligmodontia typus (Highland gerbil mouse).